We begin with the raw amino-acid sequence, 424 residues long: 3-phosphoshikimate 1-carboxyvinyltransferase (424 aa).

Lys-20, Ser-21, and Arg-25 together coordinate 3-phosphoshikimate. Residue Lys-20 coordinates phosphoenolpyruvate. 2 residues coordinate phosphoenolpyruvate: Gly-92 and Arg-120. 3-phosphoshikimate contacts are provided by Ser-165, Gln-167, Asp-313, and Lys-340. Residue Gln-167 coordinates phosphoenolpyruvate. Asp-313 functions as the Proton acceptor in the catalytic mechanism. Residues Arg-344 and Arg-386 each contribute to the phosphoenolpyruvate site.

This sequence belongs to the EPSP synthase family. Monomer.

The protein resides in the cytoplasm. It carries out the reaction 3-phosphoshikimate + phosphoenolpyruvate = 5-O-(1-carboxyvinyl)-3-phosphoshikimate + phosphate. The protein operates within metabolic intermediate biosynthesis; chorismate biosynthesis; chorismate from D-erythrose 4-phosphate and phosphoenolpyruvate: step 6/7. Its function is as follows. Catalyzes the transfer of the enolpyruvyl moiety of phosphoenolpyruvate (PEP) to the 5-hydroxyl of shikimate-3-phosphate (S3P) to produce enolpyruvyl shikimate-3-phosphate and inorganic phosphate. In Bacillus cytotoxicus (strain DSM 22905 / CIP 110041 / 391-98 / NVH 391-98), this protein is 3-phosphoshikimate 1-carboxyvinyltransferase.